We begin with the raw amino-acid sequence, 78 residues long: Conotoxin Bu2 (78 aa).

An N-terminal signal peptide occupies residues 1 to 19; sequence MKLTCVLIIAVLFLTAITA. Residues 20–41 constitute a propeptide that is removed on maturation; it reads DDSRDKQVYRAVGLIDKMRRIR. Intrachain disulfides connect cysteine 46-cysteine 59, cysteine 53-cysteine 64, and cysteine 58-cysteine 73.

Belongs to the conotoxin O1 superfamily. As to expression, expressed by the venom duct.

It is found in the secreted. This chain is Conotoxin Bu2, found in Conus bullatus (Bubble cone).